Reading from the N-terminus, the 430-residue chain is Enolase (430 aa).

Q167 is a binding site for (2R)-2-phosphoglycerate. The active-site Proton donor is E209. Mg(2+) contacts are provided by D246, E287, and D314. Residues K339, R368, and S369 each coordinate (2R)-2-phosphoglycerate. K339 (proton acceptor) is an active-site residue.

This sequence belongs to the enolase family. It depends on Mg(2+) as a cofactor.

Its subcellular location is the cytoplasm. It localises to the secreted. The protein resides in the cell surface. It carries out the reaction (2R)-2-phosphoglycerate = phosphoenolpyruvate + H2O. The protein operates within carbohydrate degradation; glycolysis; pyruvate from D-glyceraldehyde 3-phosphate: step 4/5. In terms of biological role, catalyzes the reversible conversion of 2-phosphoglycerate (2-PG) into phosphoenolpyruvate (PEP). It is essential for the degradation of carbohydrates via glycolysis. This is Enolase from Synechococcus sp. (strain ATCC 27144 / PCC 6301 / SAUG 1402/1) (Anacystis nidulans).